The primary structure comprises 196 residues: Transmembrane 4 L6 family member 5 (196 aa).

At 1-9 the chain is on the cytoplasmic side; the sequence is MCTGKCARF. A helical transmembrane segment spans residues 10–30; sequence VGLSLIPLSLVCIVANALLLV. Topologically, residues 31–45 are extracellular; sequence PNGQTTWTKDHLSLQ. A helical transmembrane segment spans residues 46–66; the sequence is VWLMAGFVGGGLMVLCPGISA. Over 67–89 the chain is Cytoplasmic; that stretch reads VRAGGKGCCGAGCCGNRCRMLRS. A helical membrane pass occupies residues 90–110; it reads VFCSAIGLLGAIYCLSVSGTG. The segment at 90–196 is interaction with MTOR and CASTOR1; the sequence is VFCSAIGLLG…DCRKKQGSSQ (107 aa). Residues 111-156 lie on the Extracellular side of the membrane; it reads LRIGPQCLMNGSWDYHFQDTAGSYLLNRTQWNLCVEPPDVVLWNVT. A glycan (N-linked (GlcNAc...) asparagine) is linked at Asn-120. 123–128 is an L-arginine binding site; sequence WDYHFQ. 2 N-linked (GlcNAc...) asparagine glycosylation sites follow: Asn-137 and Asn-154. The chain crosses the membrane as a helical span at residues 157–177; that stretch reads LFSLLVAASCLEILLCGVQLV. Over 178–196 the chain is Cytoplasmic; the sequence is NASIGVLCGDCRKKQGSSQ.

The protein belongs to the L6 tetraspanin family. As to quaternary structure, interacts with MTOR; the interaction is positively regulated by arginine and is negatively regulated by leucine. Interacts with SLC38A9. Interacts with SLC7A1; the interaction is negatively regulated by arginine. Interacts with CASTOR1; the interaction is positively regulated by leucine and is negatively regulated by arginine.

It is found in the lysosome membrane. The protein localises to the cell membrane. Acts as a lysosomal membrane arginine sensor. Forms a complex with MTOR and SLC38A9 on lysosomal membranes in an arginine-regulated manner, leading to arginine efflux which enables the activation of mTORC1 which subsequently leads to RPS6KB1 and EIF4EBP1 phosphorylations. Facilitates cell cycle G1/S phase progression and the translocation of the CDK4-CCND1 complex into the nucleus. CDKN1B and RHOA/ROCK signaling activity are involved in TM4SF5-mediated acceleration of G1/S phase progression. This is Transmembrane 4 L6 family member 5 (TM4SF5) from Bos taurus (Bovine).